A 458-amino-acid polypeptide reads, in one-letter code: Secretion-regulating guanine nucleotide exchange factor (458 aa).

RCC1 repeat units lie at residues 15 to 67 (AALF…VTDG), 68 to 119 (GDLF…LTEN), 120 to 171 (GQVL…ATAS), 172 to 230 (GIVF…LTDA), 231 to 283 (GEVY…QTET), 284 to 351 (GKMF…IIGG), and 352 to 402 (VCYS…LCQL). The interval 420-458 (DAIEDTESQKAMDKERNWKERQSETSTQSQSDWSRNGGL) is disordered. The span at 426–442 (ESQKAMDKERNWKERQS) shows a compositional bias: basic and acidic residues. S427 carries the phosphoserine modification.

As to quaternary structure, interacts with SEC5. The interaction occurs only in the presence of magnesium or manganese and is stimulated by dCTP or GTP.

It is found in the cytoplasm. Its subcellular location is the nucleus. Functionally, probable guanine nucleotide exchange factor (GEF), which may be involved in the secretion process. This chain is Secretion-regulating guanine nucleotide exchange factor (SERGEF), found in Homo sapiens (Human).